A 93-amino-acid chain; its full sequence is Small ribosomal subunit protein uS19 (93 aa).

Positions Phe74–Arg93 are disordered. The segment covering His83–Arg93 has biased composition (basic and acidic residues).

This sequence belongs to the universal ribosomal protein uS19 family.

In terms of biological role, protein S19 forms a complex with S13 that binds strongly to the 16S ribosomal RNA. The chain is Small ribosomal subunit protein uS19 from Streptomyces griseus subsp. griseus (strain JCM 4626 / CBS 651.72 / NBRC 13350 / KCC S-0626 / ISP 5235).